The sequence spans 241 residues: tRNA pseudouridine synthase A (241 aa).

Asp-51 (nucleophile) is an active-site residue. Tyr-110 contributes to the substrate binding site.

It belongs to the tRNA pseudouridine synthase TruA family. In terms of assembly, homodimer.

It carries out the reaction uridine(38/39/40) in tRNA = pseudouridine(38/39/40) in tRNA. Its function is as follows. Formation of pseudouridine at positions 38, 39 and 40 in the anticodon stem and loop of transfer RNAs. This is tRNA pseudouridine synthase A from Campylobacter jejuni subsp. jejuni serotype O:23/36 (strain 81-176).